The primary structure comprises 164 residues: uncharacterized protein (164 aa).

In terms of domain architecture, RDD spans 26 to 158 (YAGFWVRFWA…DYIADTTVVH (133 aa)). Transmembrane regions (helical) follow at residues 35-55 (AFLL…SPLF) and 66-86 (MFTF…YFAL).

Its subcellular location is the cell membrane. This is an uncharacterized protein from Bacillus subtilis (strain 168).